The chain runs to 211 residues: Guanylate kinase (211 aa).

A Guanylate kinase-like domain is found at 5–184 (GLLIVFSGPS…AAERVKRIIE (180 aa)). Residue 12–19 (GPSGVGKG) participates in ATP binding.

It belongs to the guanylate kinase family.

It is found in the cytoplasm. The catalysed reaction is GMP + ATP = GDP + ADP. In terms of biological role, essential for recycling GMP and indirectly, cGMP. In Streptococcus pyogenes serotype M3 (strain SSI-1), this protein is Guanylate kinase.